We begin with the raw amino-acid sequence, 333 residues long: 1,5-anhydro-D-fructose reductase (333 aa).

Residues 9 to 12 (ASTI), 33 to 34 (ST), Arg38, 71 to 76 (TTNELH), 93 to 94 (EK), Asn120, 162 to 163 (WR), and Tyr283 each bind NADP(+).

As to quaternary structure, monomer.

It catalyses the reaction 1,5-anhydro-D-mannitol + NADP(+) = 1,5-anhydro-D-fructose + NADPH + H(+). Functionally, catalyzes the NADPH-specific reduction of 1,5-anhydro-D-fructose to 1,5-anhydro-D-mannitol. Also shows some activity against structurally related compounds such as 3-keto-1,5-anhydro-D-fructose, D-glucosone and D-xylosone. The enzyme cannot use NADH as cosubstrate. The chain is 1,5-anhydro-D-fructose reductase (afr) from Ensifer adhaerens (Sinorhizobium morelense).